A 252-amino-acid polypeptide reads, in one-letter code: MSRTPIIAGNWKLHMNPEQTTEFVDAVKGKLPDPSKVESLICAPAVDLDALRKAAEGSNLHIGAENCYFEDEGAYTGETSPKVLKEMGIDYVIIGHSERRGYFHETDEDINKKAKAIFANGMKPIICCGESLETREANKQEDWVVAQIKAALDGLTAEQVSSLVIAYEPIWAIGTGKTASSDQAEEMCKTIRETVKDLYNEETAENVRIQYGGSVKPANVKELMSKPDIDGGLVGGASLDPESFLALVNYQD.

10–12 (NWK) serves as a coordination point for substrate. H96 functions as the Electrophile in the catalytic mechanism. E168 acts as the Proton acceptor in catalysis. Substrate contacts are provided by residues G174, S214, and 235–236 (GG).

It belongs to the triosephosphate isomerase family. As to quaternary structure, homodimer.

The protein resides in the cytoplasm. It carries out the reaction D-glyceraldehyde 3-phosphate = dihydroxyacetone phosphate. It functions in the pathway carbohydrate biosynthesis; gluconeogenesis. Its pathway is carbohydrate degradation; glycolysis; D-glyceraldehyde 3-phosphate from glycerone phosphate: step 1/1. Involved in the gluconeogenesis. Catalyzes stereospecifically the conversion of dihydroxyacetone phosphate (DHAP) to D-glyceraldehyde-3-phosphate (G3P). This Lactobacillus acidophilus (strain ATCC 700396 / NCK56 / N2 / NCFM) protein is Triosephosphate isomerase.